We begin with the raw amino-acid sequence, 405 residues long: Acetylornithine/succinyldiaminopimelate aminotransferase (405 aa).

Pyridoxal 5'-phosphate is bound by residues 108 to 109 (GT) and Phe141. Arg144 serves as a coordination point for N(2)-acetyl-L-ornithine. Pyridoxal 5'-phosphate is bound at residue 226-229 (DEVQ). Position 255 is an N6-(pyridoxal phosphate)lysine (Lys255). Residue Ser283 participates in N(2)-acetyl-L-ornithine binding. Thr284 contributes to the pyridoxal 5'-phosphate binding site.

This sequence belongs to the class-III pyridoxal-phosphate-dependent aminotransferase family. ArgD subfamily. Homodimer. Pyridoxal 5'-phosphate is required as a cofactor.

It is found in the cytoplasm. The catalysed reaction is N(2)-acetyl-L-ornithine + 2-oxoglutarate = N-acetyl-L-glutamate 5-semialdehyde + L-glutamate. The enzyme catalyses N-succinyl-(2S,6S)-2,6-diaminopimelate + 2-oxoglutarate = (S)-2-succinylamino-6-oxoheptanedioate + L-glutamate. The protein operates within amino-acid biosynthesis; L-arginine biosynthesis; N(2)-acetyl-L-ornithine from L-glutamate: step 4/4. Its pathway is amino-acid biosynthesis; L-lysine biosynthesis via DAP pathway; LL-2,6-diaminopimelate from (S)-tetrahydrodipicolinate (succinylase route): step 2/3. Functionally, involved in both the arginine and lysine biosynthetic pathways. This chain is Acetylornithine/succinyldiaminopimelate aminotransferase, found in Salmonella typhi.